Reading from the N-terminus, the 482-residue chain is Putative ankyrin repeat protein FPV232 (482 aa).

ANK repeat units lie at residues 36–65 (IPLI…NVNE), 69–100 (RYLT…DLSS), 101–128 (YEER…DGNR), 129–161 (TIDD…DTKI), 166–195 (KLKT…EVNS), 199–228 (GNNS…NTDH), 232–265 (CGTT…SVNI), 270–297 (LGFT…DPNI), and 301–332 (EKET…LRAF).

In Fowlpox virus (strain NVSL) (FPV), this protein is Putative ankyrin repeat protein FPV232.